A 417-amino-acid polypeptide reads, in one-letter code: NADH-quinone oxidoreductase subunit D (417 aa).

This sequence belongs to the complex I 49 kDa subunit family. As to quaternary structure, NDH-1 is composed of 14 different subunits. Subunits NuoB, C, D, E, F, and G constitute the peripheral sector of the complex.

The protein resides in the cell inner membrane. The catalysed reaction is a quinone + NADH + 5 H(+)(in) = a quinol + NAD(+) + 4 H(+)(out). Functionally, NDH-1 shuttles electrons from NADH, via FMN and iron-sulfur (Fe-S) centers, to quinones in the respiratory chain. The immediate electron acceptor for the enzyme in this species is believed to be ubiquinone. Couples the redox reaction to proton translocation (for every two electrons transferred, four hydrogen ions are translocated across the cytoplasmic membrane), and thus conserves the redox energy in a proton gradient. The chain is NADH-quinone oxidoreductase subunit D from Burkholderia orbicola (strain MC0-3).